The primary structure comprises 696 residues: UvrABC system protein B (696 aa).

Residues glutamate 45–proline 434 enclose the Helicase ATP-binding domain. Position 58-65 (glycine 58–threonine 65) interacts with ATP. Residues tyrosine 111 to valine 134 carry the Beta-hairpin motif. The 167-residue stretch at glutamine 450–isoleucine 616 folds into the Helicase C-terminal domain. The 36-residue stretch at glycine 647–glutamine 682 folds into the UVR domain.

It belongs to the UvrB family. In terms of assembly, forms a heterotetramer with UvrA during the search for lesions. Interacts with UvrC in an incision complex.

The protein resides in the cytoplasm. In terms of biological role, the UvrABC repair system catalyzes the recognition and processing of DNA lesions. A damage recognition complex composed of 2 UvrA and 2 UvrB subunits scans DNA for abnormalities. Upon binding of the UvrA(2)B(2) complex to a putative damaged site, the DNA wraps around one UvrB monomer. DNA wrap is dependent on ATP binding by UvrB and probably causes local melting of the DNA helix, facilitating insertion of UvrB beta-hairpin between the DNA strands. Then UvrB probes one DNA strand for the presence of a lesion. If a lesion is found the UvrA subunits dissociate and the UvrB-DNA preincision complex is formed. This complex is subsequently bound by UvrC and the second UvrB is released. If no lesion is found, the DNA wraps around the other UvrB subunit that will check the other stand for damage. The protein is UvrABC system protein B of Ralstonia nicotianae (strain ATCC BAA-1114 / GMI1000) (Ralstonia solanacearum).